Reading from the N-terminus, the 59-residue chain is Large ribosomal subunit protein bL32 (59 aa).

Residues 1–19 (MPVPKRRMSRSNTRSRRAQ) show a composition bias toward basic residues. Residues 1-20 (MPVPKRRMSRSNTRSRRAQW) are disordered.

Belongs to the bacterial ribosomal protein bL32 family.

This Acidothermus cellulolyticus (strain ATCC 43068 / DSM 8971 / 11B) protein is Large ribosomal subunit protein bL32.